The following is a 197-amino-acid chain: Imidazoleglycerol-phosphate dehydratase (197 aa).

This sequence belongs to the imidazoleglycerol-phosphate dehydratase family.

The protein resides in the cytoplasm. It catalyses the reaction D-erythro-1-(imidazol-4-yl)glycerol 3-phosphate = 3-(imidazol-4-yl)-2-oxopropyl phosphate + H2O. Its pathway is amino-acid biosynthesis; L-histidine biosynthesis; L-histidine from 5-phospho-alpha-D-ribose 1-diphosphate: step 6/9. In Bradyrhizobium sp. (strain ORS 278), this protein is Imidazoleglycerol-phosphate dehydratase.